The primary structure comprises 293 residues: Ribosomal protein L11 methyltransferase (293 aa).

Residues threonine 145, glycine 166, aspartate 188, and asparagine 230 each contribute to the S-adenosyl-L-methionine site.

This sequence belongs to the methyltransferase superfamily. PrmA family.

It localises to the cytoplasm. The catalysed reaction is L-lysyl-[protein] + 3 S-adenosyl-L-methionine = N(6),N(6),N(6)-trimethyl-L-lysyl-[protein] + 3 S-adenosyl-L-homocysteine + 3 H(+). Functionally, methylates ribosomal protein L11. This Shewanella sp. (strain ANA-3) protein is Ribosomal protein L11 methyltransferase.